Consider the following 397-residue polypeptide: Elongation factor Tu (397 aa).

The tr-type G domain occupies 10-206 (KPHVNIGTIG…ACDDYIPEPV (197 aa)). Residues 19-26 (GHIDHGKT) form a G1 region. Position 19–26 (19–26 (GHIDHGKT)) interacts with GTP. T26 is a Mg(2+) binding site. Residues 62-66 (GITIS) are G2. A G3 region spans residues 83-86 (DCPG). GTP is bound by residues 83-87 (DCPGH) and 138-141 (NKAD). A G4 region spans residues 138–141 (NKAD). Positions 176-178 (SAL) are G5.

It belongs to the TRAFAC class translation factor GTPase superfamily. Classic translation factor GTPase family. EF-Tu/EF-1A subfamily. As to quaternary structure, monomer.

The protein resides in the cytoplasm. It carries out the reaction GTP + H2O = GDP + phosphate + H(+). In terms of biological role, GTP hydrolase that promotes the GTP-dependent binding of aminoacyl-tRNA to the A-site of ribosomes during protein biosynthesis. This Acidothermus cellulolyticus (strain ATCC 43068 / DSM 8971 / 11B) protein is Elongation factor Tu.